A 124-amino-acid chain; its full sequence is Large ribosomal subunit protein bL12c (124 aa).

The protein belongs to the bacterial ribosomal protein bL12 family. As to quaternary structure, homodimer. Part of the ribosomal stalk of the 50S ribosomal subunit. Forms a multimeric L10(L12)X complex, where L10 forms an elongated spine to which 2 to 4 L12 dimers bind in a sequential fashion. Binds GTP-bound translation factors.

Its subcellular location is the plastid. It is found in the chloroplast. Forms part of the ribosomal stalk which helps the ribosome interact with GTP-bound translation factors. Is thus essential for accurate translation. In Cyanidioschyzon merolae (strain NIES-3377 / 10D) (Unicellular red alga), this protein is Large ribosomal subunit protein bL12c.